Here is a 47-residue protein sequence, read N- to C-terminus: Zinc-finger protein TK0143 (47 aa).

Residues 18–41 (FRCPRCGMVFRSAKAYTRHVNKAH) form a C2H2-type zinc finger. Residues C20, C23, H36, and H41 each coordinate Zn(2+).

In terms of assembly, crystallized in association with 70S ribosomes. Zn(2+) serves as cofactor.

This is Zinc-finger protein TK0143 from Thermococcus kodakarensis (strain ATCC BAA-918 / JCM 12380 / KOD1) (Pyrococcus kodakaraensis (strain KOD1)).